The following is a 337-amino-acid chain: Outer membrane protein U (337 aa).

The signal sequence occupies residues 1 to 21 (MKKTLIALSVSAAAMATGVNA).

Belongs to the Gram-negative porin family. As to quaternary structure, homotrimer.

The protein localises to the cell outer membrane. Its function is as follows. Forms pores that allow passive diffusion of small molecules across the outer membrane. The chain is Outer membrane protein U (ompU) from Vibrio parahaemolyticus serotype O3:K6 (strain RIMD 2210633).